A 366-amino-acid chain; its full sequence is Holliday junction branch migration complex subunit RuvB (366 aa).

The tract at residues 1–49 (MAIISSKKQPPEPNGQPNKRPESAPAAPKEKVLQPEAAIDEQGKQEESI) is disordered. The large ATPase domain (RuvB-L) stretch occupies residues 13 to 210 (PNGQPNKRPE…FGLIQKLRFY (198 aa)). Residues Ile49, Arg50, Gly91, Lys94, Thr95, Thr96, 157 to 159 (EDY), Arg200, Tyr210, and Arg247 contribute to the ATP site. Thr95 is a binding site for Mg(2+). Residues 211–281 (EVDELSQIVL…IAAEALQLFQ (71 aa)) are small ATPAse domain (RuvB-S). The interval 284 to 366 (PCGLDWTDRR…TPPNEQLSLL (83 aa)) is head domain (RuvB-H). Arg339 and Arg344 together coordinate DNA.

Belongs to the RuvB family. As to quaternary structure, homohexamer. Forms an RuvA(8)-RuvB(12)-Holliday junction (HJ) complex. HJ DNA is sandwiched between 2 RuvA tetramers; dsDNA enters through RuvA and exits via RuvB. An RuvB hexamer assembles on each DNA strand where it exits the tetramer. Each RuvB hexamer is contacted by two RuvA subunits (via domain III) on 2 adjacent RuvB subunits; this complex drives branch migration. In the full resolvosome a probable DNA-RuvA(4)-RuvB(12)-RuvC(2) complex forms which resolves the HJ.

The protein resides in the cytoplasm. The enzyme catalyses ATP + H2O = ADP + phosphate + H(+). Functionally, the RuvA-RuvB-RuvC complex processes Holliday junction (HJ) DNA during genetic recombination and DNA repair, while the RuvA-RuvB complex plays an important role in the rescue of blocked DNA replication forks via replication fork reversal (RFR). RuvA specifically binds to HJ cruciform DNA, conferring on it an open structure. The RuvB hexamer acts as an ATP-dependent pump, pulling dsDNA into and through the RuvAB complex. RuvB forms 2 homohexamers on either side of HJ DNA bound by 1 or 2 RuvA tetramers; 4 subunits per hexamer contact DNA at a time. Coordinated motions by a converter formed by DNA-disengaged RuvB subunits stimulates ATP hydrolysis and nucleotide exchange. Immobilization of the converter enables RuvB to convert the ATP-contained energy into a lever motion, pulling 2 nucleotides of DNA out of the RuvA tetramer per ATP hydrolyzed, thus driving DNA branch migration. The RuvB motors rotate together with the DNA substrate, which together with the progressing nucleotide cycle form the mechanistic basis for DNA recombination by continuous HJ branch migration. Branch migration allows RuvC to scan DNA until it finds its consensus sequence, where it cleaves and resolves cruciform DNA. This Trichormus variabilis (strain ATCC 29413 / PCC 7937) (Anabaena variabilis) protein is Holliday junction branch migration complex subunit RuvB.